Reading from the N-terminus, the 208-residue chain is Probable GTP-binding protein EngB (208 aa).

Positions leucine 23–threonine 205 constitute an EngB-type G domain. Residues glycine 31–serine 38, glycine 57–leucine 61, aspartate 84–glycine 87, threonine 154–aspartate 157, and phenylalanine 182–alanine 184 each bind GTP. 2 residues coordinate Mg(2+): serine 38 and threonine 59.

The protein belongs to the TRAFAC class TrmE-Era-EngA-EngB-Septin-like GTPase superfamily. EngB GTPase family. Requires Mg(2+) as cofactor.

In terms of biological role, necessary for normal cell division and for the maintenance of normal septation. In Helicobacter pylori (strain G27), this protein is Probable GTP-binding protein EngB.